Reading from the N-terminus, the 122-residue chain is Iron-sulfur cluster assembly protein SufA (122 aa).

Residues C50, C114, and C116 each coordinate [2Fe-2S] cluster. [4Fe-4S] cluster is bound by residues C50, C114, and C116.

The protein belongs to the HesB/IscA family. Homodimer. Interacts with SufB and SufC.

Its function is as follows. Member of gene cluster sufABCDSE that mediates iron-sulfur cluster assembly under oxidative stress and iron limitation conditions. Binds [2Fe-2S] and [4Fe-4S] clusters by mobilizing sulfur atoms provided by the SufS-SufE cysteine desulfurase system and then transfers the assembled Fe-S clusters to target proteins including ferredoxin and aconitase. Seems to act as a Fe-S cluster carrier rather than a scaffold, this role being performed by SufB and SufC. The chain is Iron-sulfur cluster assembly protein SufA (sufA) from Escherichia coli (strain K12).